A 754-amino-acid polypeptide reads, in one-letter code: 1,4-alpha-glucan branching enzyme GlgB (754 aa).

The active-site Nucleophile is the aspartate 431. Glutamate 484 functions as the Proton donor in the catalytic mechanism.

It belongs to the glycosyl hydrolase 13 family. GlgB subfamily. In terms of assembly, monomer.

The catalysed reaction is Transfers a segment of a (1-&gt;4)-alpha-D-glucan chain to a primary hydroxy group in a similar glucan chain.. It functions in the pathway glycan biosynthesis; glycogen biosynthesis. Functionally, catalyzes the formation of the alpha-1,6-glucosidic linkages in glycogen by scission of a 1,4-alpha-linked oligosaccharide from growing alpha-1,4-glucan chains and the subsequent attachment of the oligosaccharide to the alpha-1,6 position. This is 1,4-alpha-glucan branching enzyme GlgB from Prochlorococcus marinus (strain AS9601).